The primary structure comprises 79 residues: MPKLKKLLLKVSTSKPNTNPPSQNEEKGTIVKQEAPIHVSNVALVCPQTQTPTKVGIRIQSGKKVRYAKKSNQTLDEKN.

Residues 1-29 are disordered; that stretch reads MPKLKKLLLKVSTSKPNTNPPSQNEEKGT. The segment covering 11-23 has biased composition (polar residues); it reads VSTSKPNTNPPSQ.

It belongs to the universal ribosomal protein uL24 family. In terms of assembly, part of the 50S ribosomal subunit.

Functionally, one of two assembly initiator proteins, it binds directly to the 5'-end of the 23S rRNA, where it nucleates assembly of the 50S subunit. Its function is as follows. One of the proteins that surrounds the polypeptide exit tunnel on the outside of the subunit. The chain is Large ribosomal subunit protein uL24 (rplX) from Onion yellows phytoplasma (strain OY-M).